The primary structure comprises 75 residues: CLAVATA3/ESR (CLE)-related protein 33 (75 aa).

The first 22 residues, 1 to 22 (MASWRMLCFVLLFTSILICHDA), serve as a signal peptide directing secretion. Residues Pro-67 and Pro-70 each carry the hydroxyproline modification. Pro-70 carries O-linked (Ara...) hydroxyproline glycosylation.

The protein belongs to the CLV3/ESR signal peptide family. Post-translationally, the O-glycosylation (arabinosylation) of the hydroxyproline Pro-70 enhances binding affinity of the CLE33p peptide for its receptor. In terms of tissue distribution, expressed in root vasculature.

It localises to the secreted. Its subcellular location is the extracellular space. Its function is as follows. Signaling peptide involved in the regulation of root colonization by arbuscular mycorrhizal (AM) fungi. Moves from root to shoot to function with the receptor kinase SUNN, in a signaling pathway that repress strigolactone biosynthetic genes and strigolactone content in the roots, and consequently reduces the promotion of further colonization by AM fungi. The protein is CLAVATA3/ESR (CLE)-related protein 33 of Medicago truncatula (Barrel medic).